Reading from the N-terminus, the 575-residue chain is 2-succinyl-5-enolpyruvyl-6-hydroxy-3-cyclohexene-1-carboxylate synthase (575 aa).

The protein belongs to the TPP enzyme family. MenD subfamily. In terms of assembly, homodimer. Mg(2+) is required as a cofactor. It depends on Mn(2+) as a cofactor. Thiamine diphosphate serves as cofactor.

It carries out the reaction isochorismate + 2-oxoglutarate + H(+) = 5-enolpyruvoyl-6-hydroxy-2-succinyl-cyclohex-3-ene-1-carboxylate + CO2. It functions in the pathway quinol/quinone metabolism; 1,4-dihydroxy-2-naphthoate biosynthesis; 1,4-dihydroxy-2-naphthoate from chorismate: step 2/7. It participates in quinol/quinone metabolism; menaquinone biosynthesis. Its function is as follows. Catalyzes the thiamine diphosphate-dependent decarboxylation of 2-oxoglutarate and the subsequent addition of the resulting succinic semialdehyde-thiamine pyrophosphate anion to isochorismate to yield 2-succinyl-5-enolpyruvyl-6-hydroxy-3-cyclohexene-1-carboxylate (SEPHCHC). This is 2-succinyl-5-enolpyruvyl-6-hydroxy-3-cyclohexene-1-carboxylate synthase from Syntrophus aciditrophicus (strain SB).